A 403-amino-acid polypeptide reads, in one-letter code: tRNA(Met) cytidine acetate ligase (403 aa).

ATP contacts are provided by residues 7-20 (VVEY…HAYH), Gly101, Asn164, and 189-190 (RI).

The protein belongs to the TmcAL family.

It localises to the cytoplasm. The enzyme catalyses cytidine(34) in elongator tRNA(Met) + acetate + ATP = N(4)-acetylcytidine(34) in elongator tRNA(Met) + AMP + diphosphate. Catalyzes the formation of N(4)-acetylcytidine (ac(4)C) at the wobble position of elongator tRNA(Met), using acetate and ATP as substrates. First activates an acetate ion to form acetyladenylate (Ac-AMP) and then transfers the acetyl group to tRNA to form ac(4)C34. This chain is tRNA(Met) cytidine acetate ligase, found in Lysinibacillus sphaericus (strain C3-41).